Here is a 218-residue protein sequence, read N- to C-terminus: Probable signal peptidase I-2 (218 aa).

At 1–26 (MTENIVRETSKKKESPPENTWLELGK) the chain is on the cytoplasmic side. Residues 27–43 (TMVTAVILAIGIRTFVA) form a helical membrane-spanning segment. Over 44 to 218 (EARYIPSSSM…ISPQTVPESR (175 aa)) the chain is Periplasmic. Active-site residues include S52 and K100.

It belongs to the peptidase S26 family.

It is found in the cell membrane. The enzyme catalyses Cleavage of hydrophobic, N-terminal signal or leader sequences from secreted and periplasmic proteins.. The sequence is that of Probable signal peptidase I-2 (lepB2) from Synechocystis sp. (strain ATCC 27184 / PCC 6803 / Kazusa).